We begin with the raw amino-acid sequence, 711 residues long: Polyribonucleotide nucleotidyltransferase (711 aa).

The Mg(2+) site is built by aspartate 486 and aspartate 492. The KH domain occupies 553–612 (PRIHTIKINPDKIKDVIGKGGSVIRALTEETGTTIEIEDDGTVKIAATDGDKAQHAIRRI). In terms of domain architecture, S1 motif spans 622–690 (GRIYNGKVTR…RQGRVRLSIK (69 aa)). A disordered region spans residues 691–711 (EATEQTPSAAAPEAPVAEQGE). A compositionally biased stretch (low complexity) spans 699–711 (AAAPEAPVAEQGE).

This sequence belongs to the polyribonucleotide nucleotidyltransferase family. In terms of assembly, component of the RNA degradosome, which is a multiprotein complex involved in RNA processing and mRNA degradation. Mg(2+) is required as a cofactor.

Its subcellular location is the cytoplasm. It carries out the reaction RNA(n+1) + phosphate = RNA(n) + a ribonucleoside 5'-diphosphate. Functionally, involved in mRNA degradation. Catalyzes the phosphorolysis of single-stranded polyribonucleotides processively in the 3'- to 5'-direction. This Klebsiella pneumoniae (strain 342) protein is Polyribonucleotide nucleotidyltransferase.